Here is a 337-residue protein sequence, read N- to C-terminus: m7GpppX diphosphatase (337 aa).

A disordered region spans residues 1–37; that stretch reads MAELAHQQSKRKRELDAEEAEASSTEGEEAGVGNGTS. Position 2 is an N-acetylalanine (Ala-2). The short motif at 10-13 is the nuclear localization signal (NLS) element; it reads KRKR. The segment covering 16–29 has biased composition (acidic residues); it reads DAEEAEASSTEGEE. A phosphoserine mark is found at Ser-24 and Ser-101. N6-acetyllysine is present on residues Lys-138 and Lys-142. A nuclear export sequence (NES) motif is present at residues 142–154; it reads KYLRQDLHLVRET. Substrate-binding positions include Trp-175, Glu-185, Asp-205, Lys-207, and 268–279; that span reads HYLPSYYHLHVH. A Histidine triad motif motif is present at residues 275-279; the sequence is HLHVH. Catalysis depends on His-277, which acts as the Nucleophile.

The protein belongs to the HIT family. In terms of assembly, homodimer. Associates with components of the exosome multienzyme ribonuclease complex, such as EXOSC3 and EXOSC4. Interacts with NDOR1.

The protein localises to the cytoplasm. It is found in the nucleus. It carries out the reaction a 5'-end (N(7)-methyl 5'-triphosphoguanosine)-ribonucleoside in mRNA + H2O = N(7)-methyl-GMP + a 5'-end diphospho-ribonucleoside in mRNA + 2 H(+). Its activity is regulated as follows. The hydrolytic product 7-methylguanosine diphosphate (m7GDP) efficiently inhibits the decapping scavenger activity and acts as a competitive inhibitor in vitro. Inhibited by 2,4-diaminoquinazoline. Its function is as follows. Decapping scavenger enzyme that catalyzes the cleavage of a residual cap structure following the degradation of mRNAs by 3'-&gt;5' exosome-mediated mRNA decay pathway. Hydrolyzes cap analog structures like 7-methylguanosine nucleoside triphosphate (m7GpppG) with up to 10 nucleotide substrates (small capped oligoribonucleotides) and specifically releases 5'-phosphorylated RNA fragments and 7-methylguanosine monophosphate (m7GMP). Cleaves cap analog structures like tri-methyl guanosine nucleoside triphosphate (m3(2,2,7)GpppG) with very poor efficiency. Does not hydrolyze unmethylated cap analog (GpppG) and shows no decapping activity on intact m7GpppG-capped mRNA molecules longer than 25 nucleotides. Does not hydrolyze 7-methylguanosine diphosphate (m7GDP) to m7GMP. May also play a role in the 5'-&gt;3 mRNA decay pathway; m7GDP, the downstream product released by the 5'-&gt;3' mRNA mediated decapping activity, may be also converted by DCPS to m7GMP. Binds to m7GpppG and strongly to m7GDP. Plays a role in first intron splicing of pre-mRNAs. Inhibits activation-induced cell death. This chain is m7GpppX diphosphatase (DCPS), found in Bos taurus (Bovine).